A 300-amino-acid polypeptide reads, in one-letter code: Protein sprouty homolog 4 (300 aa).

The residue at position 1 (methionine 1) is an N-acetylmethionine. Disordered stretches follow at residues 1–28 and 52–114; these read MEPPVPQSSVPVNPSSVMVQPLLDSRAP and DYID…RLLD. Low complexity-rich tracts occupy residues 7-21 and 92-108; these read QSSVPVNPSSVMVQP and SFSGRPSSVSSSSSTSS. Serine 126 carries the phosphoserine modification. The SPR domain occupies 167-274; that stretch reads KCKECASPRT…GYDRLRRPGC (108 aa).

Belongs to the sprouty family. Interacts (via C-terminus) with TESK1 (via both C- and N-termini); the interaction inhibits TESK1 kinase activity. Interacts with RAF1. Interacts with CAV1 (via C-terminus). As to expression, expressed in the embryo and adult tissues including heart, brain, lung, kidney, and skeletal muscle.

Its subcellular location is the cytoplasm. It is found in the cell projection. The protein resides in the ruffle membrane. Functionally, suppresses the insulin receptor and EGFR-transduced MAPK signaling pathway, but does not inhibit MAPK activation by a constitutively active mutant Ras. Probably impairs the formation of GTP-Ras. Inhibits Ras-independent, but not Ras-dependent, activation of RAF1. Represses integrin-mediated cell spreading via inhibition of TESK1-mediated phosphorylation of cofilin. The sequence is that of Protein sprouty homolog 4 (Spry4) from Mus musculus (Mouse).